The chain runs to 466 residues: Citrate synthase, mitochondrial (466 aa).

A mitochondrion-targeting transit peptide spans 1–27; sequence MALLTAAARLFGAKNASCLVLAARHAS. The short motif at 2 to 21 is the SIFI-degron element; it reads ALLTAAARLFGAKNASCLVL. N6-succinyllysine is present on lysine 57. Lysine 76 carries the N6-acetyllysine; alternate modification. Lysine 76 bears the N6-succinyllysine; alternate mark. 2 positions are modified to N6-succinyllysine: lysine 103 and lysine 193. Serine 226 bears the Phosphoserine mark. Residue histidine 301 is part of the active site. Lysine 321 and lysine 327 each carry N6-acetyllysine; alternate. Lysine 321 and lysine 327 each carry N6-succinyllysine; alternate. Histidine 347 is an active-site residue. Arginine 356 lines the oxaloacetate pocket. N6-acetyllysine; alternate is present on lysine 375. Lysine 375 bears the N6-succinyllysine; alternate mark. Lysine 382 carries the post-translational modification N6-acetyllysine. N6-acetyllysine; alternate is present on lysine 393. Lysine 393 bears the N6-succinyllysine; alternate mark. At lysine 395 the chain carries N6,N6,N6-trimethyllysine. Residue aspartate 402 is part of the active site. Oxaloacetate contacts are provided by arginine 428 and arginine 448. Lysine 450 is modified (N6-succinyllysine). Position 459 is an N6-acetyllysine; alternate (lysine 459). Lysine 459 carries the post-translational modification N6-succinyllysine; alternate.

The protein belongs to the citrate synthase family. As to quaternary structure, homodimer. Post-translationally, methylated. Trimethylation at Lys-395 by CSKMT decreases citrate synthase activity. In response to mitochondrial stress, the precursor protein is ubiquitinated by the SIFI complex in the cytoplasm before mitochondrial import, leading to its degradation. Within the SIFI complex, UBR4 initiates ubiquitin chain that are further elongated or branched by KCMF1.

The protein resides in the mitochondrion matrix. The enzyme catalyses oxaloacetate + acetyl-CoA + H2O = citrate + CoA + H(+). It functions in the pathway carbohydrate metabolism; tricarboxylic acid cycle; isocitrate from oxaloacetate: step 1/2. Functionally, key enzyme of the Krebs tricarboxylic acid cycle which catalyzes the synthesis of citrate from acetyl coenzyme A and oxaloacetate. This chain is Citrate synthase, mitochondrial (CS), found in Bos taurus (Bovine).